The chain runs to 531 residues: Peptide chain release factor 3 (531 aa).

The region spanning 13–282 is the tr-type G domain; it reads SKRRTFAIIS…GLTQWAPSPM (270 aa). Residues 22–29, 90–94, and 144–147 each bind GTP; these read SHPDAGKT, DTPGH, and NKLD.

It belongs to the TRAFAC class translation factor GTPase superfamily. Classic translation factor GTPase family. PrfC subfamily.

The protein resides in the cytoplasm. Its function is as follows. Increases the formation of ribosomal termination complexes and stimulates activities of RF-1 and RF-2. It binds guanine nucleotides and has strong preference for UGA stop codons. It may interact directly with the ribosome. The stimulation of RF-1 and RF-2 is significantly reduced by GTP and GDP, but not by GMP. This Vibrio cholerae serotype O1 (strain ATCC 39315 / El Tor Inaba N16961) protein is Peptide chain release factor 3.